We begin with the raw amino-acid sequence, 206 residues long: FMN-dependent NADH:quinone oxidoreductase (206 aa).

FMN contacts are provided by residues Ser-10 and 15 to 17 (SVS).

This sequence belongs to the azoreductase type 1 family. As to quaternary structure, homodimer. The cofactor is FMN.

The enzyme catalyses 2 a quinone + NADH + H(+) = 2 a 1,4-benzosemiquinone + NAD(+). It carries out the reaction N,N-dimethyl-1,4-phenylenediamine + anthranilate + 2 NAD(+) = 2-(4-dimethylaminophenyl)diazenylbenzoate + 2 NADH + 2 H(+). Its function is as follows. Quinone reductase that provides resistance to thiol-specific stress caused by electrophilic quinones. Also exhibits azoreductase activity. Catalyzes the reductive cleavage of the azo bond in aromatic azo compounds to the corresponding amines. In Acidobacterium capsulatum (strain ATCC 51196 / DSM 11244 / BCRC 80197 / JCM 7670 / NBRC 15755 / NCIMB 13165 / 161), this protein is FMN-dependent NADH:quinone oxidoreductase.